A 564-amino-acid chain; its full sequence is Probable beta-glucosidase btgE (564 aa).

An N-terminal signal peptide occupies residues 1–18; it reads MRGAFLATAAAIAGTAMA. Positions 285 to 304 are disordered; sequence ATSSVAPSSSPSKPAAPSGA. The N-linked (GlcNAc...) asparagine glycan is linked to Asn-404. Glu-405 serves as the catalytic Proton donor. Glu-501 serves as the catalytic Nucleophile.

Belongs to the glycosyl hydrolase 17 family.

Its subcellular location is the secreted. The protein localises to the cell wall. The enzyme catalyses Hydrolysis of terminal, non-reducing beta-D-glucosyl residues with release of beta-D-glucose.. It participates in glycan metabolism; cellulose degradation. In terms of biological role, beta-glucosidases are one of a number of cellulolytic enzymes involved in the degradation of cellulosic biomass. Catalyzes the last step releasing glucose from the inhibitory cellobiose. The chain is Probable beta-glucosidase btgE (btgE) from Aspergillus clavatus (strain ATCC 1007 / CBS 513.65 / DSM 816 / NCTC 3887 / NRRL 1 / QM 1276 / 107).